A 367-amino-acid chain; its full sequence is MSRPQRLTSSSPWDCSGGVFDWDAALRKLDELNARVEDPTLWDRPSEAQAVSRDRASLAARVGAVQELEGGLKDALEYAELADMEGDEALLEDARAQLKDLKDRAGRAELEALLSGEADGNDCYVEINSGAGGTESCDWAGMLLRMYSRWANAHKMSVELVEETAGDQVGIKSATLLVKGANAYGWLKTEAGVHRLVRISPYDAAAKRHTSFASAWVYPVVDDTIEIDINPSDVRTDTYRASGAGGQHINKTDSAVRLTHIPTGIAVACQAGRSQHQNREEAWKMLRARLYEAELQRREAAQQALEDQKTDIGWGHQIRSYVLQPYQMVKDLRTNVETSDTQGVLDGDLDAFMGASLAQRVGATRDA.

Q247 bears the N5-methylglutamine mark.

It belongs to the prokaryotic/mitochondrial release factor family. In terms of processing, methylated by PrmC. Methylation increases the termination efficiency of RF2.

Its subcellular location is the cytoplasm. Functionally, peptide chain release factor 2 directs the termination of translation in response to the peptide chain termination codons UGA and UAA. This Caulobacter sp. (strain K31) protein is Peptide chain release factor 2.